The sequence spans 173 residues: Photosystem I assembly protein Ycf3 (173 aa).

TPR repeat units lie at residues 35 to 68 (AFAY…EEDP), 72 to 105 (AFIL…NAKM), and 120 to 153 (GSIA…APNN).

The protein belongs to the Ycf3 family.

Its subcellular location is the cellular thylakoid membrane. In terms of biological role, essential for the assembly of the photosystem I (PSI) complex. May act as a chaperone-like factor to guide the assembly of the PSI subunits. In Synechococcus sp. (strain RCC307), this protein is Photosystem I assembly protein Ycf3.